We begin with the raw amino-acid sequence, 251 residues long: Probable transcriptional regulatory protein DehaBAV1_0421 (251 aa).

The protein belongs to the TACO1 family.

It localises to the cytoplasm. In Dehalococcoides mccartyi (strain ATCC BAA-2100 / JCM 16839 / KCTC 5957 / BAV1), this protein is Probable transcriptional regulatory protein DehaBAV1_0421.